A 403-amino-acid chain; its full sequence is Argininosuccinate synthase (403 aa).

10 to 18 (AYSGGLDTS) contributes to the ATP binding site. Tyr-87 serves as a coordination point for L-citrulline. ATP is bound at residue Gly-117. The L-aspartate site is built by Thr-119, Asn-123, and Asp-124. Asn-123 provides a ligand contact to L-citrulline. Residues Arg-127, Ser-175, Ser-184, Glu-260, and Tyr-272 each coordinate L-citrulline.

Belongs to the argininosuccinate synthase family. Type 1 subfamily. In terms of assembly, homotetramer.

The protein localises to the cytoplasm. The enzyme catalyses L-citrulline + L-aspartate + ATP = 2-(N(omega)-L-arginino)succinate + AMP + diphosphate + H(+). Its pathway is amino-acid biosynthesis; L-arginine biosynthesis; L-arginine from L-ornithine and carbamoyl phosphate: step 2/3. This chain is Argininosuccinate synthase, found in Bacillus pumilus (strain SAFR-032).